The primary structure comprises 206 residues: FMN-dependent NADH:quinone oxidoreductase 1 (206 aa).

Residues serine 10 and 16-18 (SLS) contribute to the FMN site.

This sequence belongs to the azoreductase type 1 family. As to quaternary structure, homodimer. It depends on FMN as a cofactor.

It catalyses the reaction 2 a quinone + NADH + H(+) = 2 a 1,4-benzosemiquinone + NAD(+). The catalysed reaction is N,N-dimethyl-1,4-phenylenediamine + anthranilate + 2 NAD(+) = 2-(4-dimethylaminophenyl)diazenylbenzoate + 2 NADH + 2 H(+). Quinone reductase that provides resistance to thiol-specific stress caused by electrophilic quinones. Its function is as follows. Also exhibits azoreductase activity. Catalyzes the reductive cleavage of the azo bond in aromatic azo compounds to the corresponding amines. In Burkholderia lata (strain ATCC 17760 / DSM 23089 / LMG 22485 / NCIMB 9086 / R18194 / 383), this protein is FMN-dependent NADH:quinone oxidoreductase 1.